We begin with the raw amino-acid sequence, 117 residues long: Large ribosomal subunit protein bL20c (117 aa).

This sequence belongs to the bacterial ribosomal protein bL20 family.

It is found in the plastid. The protein resides in the chloroplast. Functionally, binds directly to 23S ribosomal RNA and is necessary for the in vitro assembly process of the 50S ribosomal subunit. It is not involved in the protein synthesizing functions of that subunit. The chain is Large ribosomal subunit protein bL20c from Barbarea verna (Land cress).